The sequence spans 206 residues: Small ribosomal subunit protein eS1 (206 aa).

The protein belongs to the eukaryotic ribosomal protein eS1 family.

The polypeptide is Small ribosomal subunit protein eS1 (Methanocorpusculum labreanum (strain ATCC 43576 / DSM 4855 / Z)).